Consider the following 403-residue polypeptide: Argininosuccinate synthase (403 aa).

ATP is bound by residues 12 to 20 and alanine 39; that span reads AYSGGLDTS. L-citrulline is bound at residue tyrosine 91. Residue glycine 121 coordinates ATP. Threonine 123, asparagine 127, and aspartate 128 together coordinate L-aspartate. Asparagine 127 is a binding site for L-citrulline. Positions 131, 180, 189, 265, and 277 each coordinate L-citrulline.

It belongs to the argininosuccinate synthase family. Type 1 subfamily. As to quaternary structure, homotetramer.

It is found in the cytoplasm. The catalysed reaction is L-citrulline + L-aspartate + ATP = 2-(N(omega)-L-arginino)succinate + AMP + diphosphate + H(+). The protein operates within amino-acid biosynthesis; L-arginine biosynthesis; L-arginine from L-ornithine and carbamoyl phosphate: step 2/3. The protein is Argininosuccinate synthase of Buchnera aphidicola subsp. Acyrthosiphon pisum (strain 5A).